We begin with the raw amino-acid sequence, 483 residues long: Glycogen synthase (483 aa).

ADP-alpha-D-glucose is bound at residue Lys-15.

It belongs to the glycosyltransferase 1 family. Bacterial/plant glycogen synthase subfamily.

It catalyses the reaction [(1-&gt;4)-alpha-D-glucosyl](n) + ADP-alpha-D-glucose = [(1-&gt;4)-alpha-D-glucosyl](n+1) + ADP + H(+). It functions in the pathway glycan biosynthesis; glycogen biosynthesis. Its function is as follows. Synthesizes alpha-1,4-glucan chains using ADP-glucose. The protein is Glycogen synthase of Exiguobacterium sibiricum (strain DSM 17290 / CCUG 55495 / CIP 109462 / JCM 13490 / 255-15).